Consider the following 851-residue polypeptide: Venom phosphodiesterase 1 (851 aa).

An N-terminal signal peptide occupies residues 1 to 23 (MIQQKVLFISLVAVTLGLGLGLG). 2 consecutive SMB domains span residues 30 to 73 (PQVS…VLPT) and 74 to 118 (QSWS…GETS). 16 disulfides stabilise this stretch: cysteine 34–cysteine 38, cysteine 34–cysteine 51, cysteine 38–cysteine 69, cysteine 49–cysteine 51, cysteine 49–cysteine 62, cysteine 55–cysteine 61, cysteine 62–cysteine 69, cysteine 78–cysteine 83, cysteine 78–cysteine 95, cysteine 83–cysteine 113, cysteine 93–cysteine 95, cysteine 93–cysteine 106, cysteine 99–cysteine 105, cysteine 106–cysteine 113, cysteine 124–cysteine 170, and cysteine 132–cysteine 344. Asparagine 39 carries an N-linked (GlcNAc...) asparagine glycan. A Cell attachment site motif is present at residues 58–60 (RQA). A divalent metal cation-binding residues include aspartate 147 and threonine 185. Threonine 185 (AMP-threonine intermediate) is an active-site residue. 3 N-linked (GlcNAc...) asparagine glycosylation sites follow: asparagine 216, asparagine 259, and asparagine 270. An AMP-binding site is contributed by lysine 271. A divalent metal cation-binding residues include aspartate 305, histidine 309, aspartate 352, and histidine 353. Histidine 309 serves as a coordination point for AMP. Intrachain disulfides connect cysteine 360–cysteine 457, cysteine 408–cysteine 793, cysteine 541–cysteine 599, cysteine 554–cysteine 654, cysteine 556–cysteine 639, and cysteine 762–cysteine 772. Asparagine 405 carries N-linked (GlcNAc...) asparagine glycosylation. An a divalent metal cation-binding site is contributed by histidine 462. Asparagine 512, asparagine 594, asparagine 674, and asparagine 745 each carry an N-linked (GlcNAc...) asparagine glycan.

It belongs to the nucleotide pyrophosphatase/phosphodiesterase family. Monomer cleaved in two subunits; disulfide-linked. Is synthesized as a single-chain protein and is subsequently cleaved to form a two-subunit protein held together with disulfide bonds. A divalent metal cation is required as a cofactor. In terms of tissue distribution, expressed by venom gland.

It localises to the secreted. The enzyme catalyses ADP + H2O = AMP + phosphate + H(+). Its function is as follows. Hydrolyzes ADP with high activity. Shows weak or no activity on 5'-AMP, 5'-GMP, 3'-AMP, ATP, cAMP, and cGMP. Is devoid of monophosphatase and proteinase activities. Dose-dependently inhibits platelet aggregation induced by ADP and collagen. This is Venom phosphodiesterase 1 from Crotalus adamanteus (Eastern diamondback rattlesnake).